Consider the following 44-residue polypeptide: KLMKQGGAALEGSALANGRALSAGSPPVPPGWNRIPPLGRAQEE.

The interval 19–44 is disordered; it reads RALSAGSPPVPPGWNRIPPLGRAQEE.

This sequence belongs to the distal-less homeobox family. As to quaternary structure, interacts with SMAD4 (via homeobox DNA-binding domain). Interacts (via homeobox DNA-binding domain) with POU4F2; this interaction suppresses DLX1-mediated transcriptional activity in postnatal retina and enhances retinal ganglion cell (RGC) differentiation.

The protein resides in the nucleus. Its function is as follows. Plays a role as a transcriptional activator or repressor. Inhibits several cytokine signaling pathways, such as TGFB1, activin-A/INHBA and BMP4 by interfering with the transcriptional stimulatory activity of transcription factors, such as MSX2, FAST2, SMAD2 and SMAD3 during hematopoietic cell differentiation. Plays a role in terminal differentiation of interneurons, such as amacrine and bipolar cells in the developing retina. Likely to play a regulatory role in the development of the ventral forebrain. May play a role in craniofacial patterning and morphogenesis and may be involved in the early development of diencephalic subdivisions. The protein is Homeobox protein DLX-1 (Dlx1) of Rattus norvegicus (Rat).